We begin with the raw amino-acid sequence, 3159 residues long: E1A-binding protein p400 (3159 aa).

A compositionally biased stretch (polar residues) spans 1–16; the sequence is MHHGTGPQNVQHQLQR. Disordered stretches follow at residues 1–65, 125–154, 212–261, 282–359, 545–594, 633–658, and 684–770; these read MHHG…MNRS, SPLSQQVQTQSPTQPSPGPGQALQNVRAGA, PGTP…HITT, VLQG…PASP, LMPT…PQLP, QQPNVPIPAPPSSQLPIPPSQPAQLA, and TRLP…SQDT. A compositionally biased stretch (pro residues) spans 31–41; the sequence is HPNPPPSPAAP. Low complexity predominate over residues 42 to 55; that stretch reads FAPSASPSAPQSPS. A Phosphoserine modification is found at Ser53. Polar residues predominate over residues 56–65; the sequence is YQIQQLMNRS. Composition is skewed to low complexity over residues 125 to 137 and 237 to 256; these read SPLSQQVQTQSPT and LGPQSPAAAGGAGLQPLASP. Residue Ser135 is modified to Phosphoserine. Phosphoserine is present on residues Ser315 and Ser321. Positions 558–571 are enriched in low complexity; the sequence is QAAQLAGQRQSQQQ. Residues 572 to 585 show a composition bias toward polar residues; sequence YDPSTGPPVQNAAS. Composition is skewed to pro residues over residues 637-653 and 689-698; these read VPIPAPPSSQLPIPPSQ and DPAPPCPRPL. The span at 699–711 shows a compositional bias: low complexity; sequence PTSSTSSLAPVSG. 2 stretches are compositionally biased toward polar residues: residues 725-742 and 751-760; these read NRPSSATNKALSPVTSRT and TKPQSPAQNA. Phosphoserine is present on residues Ser736 and Ser755. Over residues 761-770 the composition is skewed to low complexity; the sequence is TSSQDSSQDT. The 73-residue stretch at 799–871 folds into the HSA domain; the sequence is LPKLQEAPRP…EQSRLRRIAA (73 aa). Disordered stretches follow at residues 915 to 967 and 997 to 1024; these read ELRP…GVVD and SSQWPRPKPDGEDTSGEEDADDCPGDRE. Phosphoserine is present on residues Ser928 and Ser941. Thr945 carries the phosphothreonine modification. 2 stretches are compositionally biased toward acidic residues: residues 945–962 and 1008–1019; these read TDDEVDDEEETIEEEEAN and EDTSGEEDADDC. Residues 951-1365 form an interactions with RUVBL1 and RUVBL2 region; it reads DEEETIEEEE…NVLSILVRLQ (415 aa). A Phosphoserine modification is found at Ser1011. The Helicase ATP-binding domain maps to 1103-1268; sequence AKLYRKNLNG…WTMVHFLVPG (166 aa). 1116–1123 serves as a coordination point for ATP; it reads DEAGLGKT. The DEAH box-like signature appears at 1219–1222; sequence DEMQ. The disordered stretch occupies residues 1467–1582; the sequence is VQYGQKPEGR…QAPSHAAGQS (116 aa). Lys1472 carries the post-translational modification N6-acetyllysine. Low complexity-rich tracts occupy residues 1481–1498 and 1538–1565; these read PSTHPPRTAAPTTASAAP and PASASSTAASPAHPAKLRAQTTAQASTP. Residues Ser1547, Ser1728, and Ser1732 each carry the phosphoserine modification. Residues 1787-1807 form a disordered region; that stretch reads GSLDGRRGKEAGPAHSYTSSS. A compositionally biased stretch (basic and acidic residues) spans 1789–1798; it reads LDGRRGKEAG. In terms of domain architecture, Helicase C-terminal spans 1899 to 2056; it reads KLEALAILLQ…GNDYSMAFLT (158 aa). 2 disordered regions span residues 2119–2144 and 2287–2311; these read KSAQEGVLGPHTDALSSDSENMPCDE and KERKRHKTDPSAAGRKKKQRHGEAV. Residues Lys2349 and Lys2356 each carry the N6-acetyllysine modification. Residues 2360–2429 form the Myb-like domain; that stretch reads EPGQDNPEWL…QCRNRYENVI (70 aa). Disordered regions lie at residues 2524 to 2602 and 2665 to 2688; these read KEKK…AQPA and TPGGSAPAQVVHTQPPPRAVGSPA. Residues 2524–2789 are interaction with ZNF42; sequence KEKKALADQQ…QQQQQTTTTS (266 aa). The segment covering 2530 to 2540 has biased composition (low complexity); it reads ADQQKAQQPAV. 2 stretches are compositionally biased toward pro residues: residues 2541–2563 and 2572–2589; these read AQPPPPQPQPPPPPQQPPPPLPQ and PAGPPAVQPQPQPQPQTQ. Low complexity predominate over residues 2590 to 2602; that stretch reads PQPVQAPAKAQPA. Ser2686 bears the Phosphoserine mark. Position 2813 is a phosphothreonine (Thr2813). 2 disordered regions span residues 2821 to 2869 and 3115 to 3159; these read QKQK…TAPR and APLQ…PPCQ. Residues 2828-2843 are compositionally biased toward pro residues; sequence PPQPPPPQAQSAPPQP. The segment covering 2844 to 2866 has biased composition (low complexity); that stretch reads TAQVQVQTSQPPQQQSPQLTTVT. Polar residues predominate over residues 3129-3140; that stretch reads PASSDSPSQQPK.

The protein belongs to the SNF2/RAD54 helicase family. SWR1 subfamily. As to quaternary structure, component of the NuA4 histone acetyltransferase complex which contains the catalytic subunit KAT5/TIP60 and the subunits EP400, TRRAP/PAF400, BRD8/SMAP, EPC1, DMAP1/DNMAP1, RUVBL1/TIP49, RUVBL2, ING3, actin, ACTL6A/BAF53A, MORF4L1/MRG15, MORF4L2/MRGX, MRGBP, YEATS4/GAS41, VPS72/YL1 and MEAF6. May also participate in the formation of NuA4 related complexes which lack the KAT5/TIP60 catalytic subunit, but which include the SWI/SNF related protein SRCAP. The NuA4 complex interacts with MYC and the adenovirus E1A protein. EP400 interacts with TRRAP, RUVBL1 and RUVBL2. Component of a SWR1-like complex. Interacts with ZNF42. Interacts with PHF5A. Interacts with human cytomegalovirus UL27. Interacts with human adenovirus 5 E1A protein; this interaction stabilizes MYC. As to expression, ubiquitously expressed.

Its subcellular location is the nucleus. Component of the NuA4 histone acetyltransferase complex which is involved in transcriptional activation of select genes principally by acetylation of nucleosomal histones H4 and H2A. This modification may both alter nucleosome - DNA interactions and promote interaction of the modified histones with other proteins which positively regulate transcription. May be required for transcriptional activation of E2F1 and MYC target genes during cellular proliferation. The NuA4 complex ATPase and helicase activities seem to be, at least in part, contributed by the association of RUVBL1 and RUVBL2 with EP400. May regulate ZNF42 transcription activity. Component of a SWR1-like complex that specifically mediates the removal of histone H2A.Z/H2AZ1 from the nucleosome. In Homo sapiens (Human), this protein is E1A-binding protein p400 (EP400).